The chain runs to 222 residues: MPKLTPTERGIAIYNPLVLQIYDYWVLNIVNTWAWRCPTKTHLLPLFVSNIGSNHLDIGVGTGYYLANGTIPQTTRLTLCDLSPTAMAKAKARAGREDARELLCDVLKPLPVRAGEKFDSVSMYFLLHCLPGPVGNKICVFEHVKGVLKEDGVVTGATVLGKGVKDNFFGGLIRRFCVYDGIMSNETDDVESFVEALKANFEVVEVDVIGVVLVFKAMKPKL.

It belongs to the methyltransferase superfamily.

It catalyses the reaction emodin + S-adenosyl-L-methionine = physcion + S-adenosyl-L-homocysteine. It functions in the pathway secondary metabolite biosynthesis. In terms of biological role, O-methyltransferase; part of the gene cluster that mediates the biosynthesis of physcion, a natural anthraquinone fungicide that can prevent plant fungal infections. Within the pathway, the O-methyltransferase AcOMT catalyzes the last step by transferring a methyl group to C-6 hydroxyl of emodin to form physcion. AcOMT may also methylate the C-6 hydroxyl group of emodin anthrone to produce physcion-anthrone B. The pathway begins with the polyketide synthase AcPKS that condenses 8 malonyl-CoA units to synthesize atrochrysone thioester which is released from the synthase by the atrochrysone carboxyl ACP thioesterase AcTE that breaks the thioester bond and leads to free atrochrysone carboxylic acid. Spontaneous decarboxylation of atrochrysone carboxylic acid leads to the formation of atrochrysone. Then, atrochrysone undergoes spontaneous dehydration and oxidation, giving the products emodin anthrone and emodin. The O-methyltransferase AcOMT then methylates the C-6 hydroxyl of emodin to form physcion. The sequence is that of Physcion biosynthesis cluster O-methyltransferase from Aspergillus chevalieri (Eurotium chevalieri).